The primary structure comprises 94 residues: Neutrophil defensin 1 (94 aa).

A signal peptide spans 1–19 (MRTLAILAAILLVALQAQA). The propeptide occupies 20–64 (EPLQARADEVAAAPEQIPADNPEVVVSLAWDESLAPKHPGSRKNV). Intrachain disulfides connect C66/C94, C68/C83, and C73/C93. R78 carries the post-translational modification ADP-ribosylarginine; by ART1. Y85 carries the post-translational modification Phosphotyrosine. R88 is subject to ADP-ribosylarginine; by ART1.

It belongs to the alpha-defensin family. Tetramer. Dimer. Interacts with RETN. Post-translationally, ADP-ribosylation drastically reduces cytotoxic and antibacterial activities, and enhances IL8 production.

The protein resides in the secreted. Its function is as follows. Effector molecule of the innate immune system that acts via antibiotic-like properties against a broad array of infectious agents including bacteria, fungi, and viruses or by promoting the activation and maturation of some APCs. Interacts with the essential precursor of cell wall synthesis lipid II to inhibit bacterial cell wall synthesis. Inhibits adenovirus infection via inhibition of viral disassembly at the vertex region, thereby restricting the release of internal capsid protein pVI, which is required for endosomal membrane penetration during cell entry. In addition, interaction with adenovirus capsid leads to the redirection of viral particles to TLR4 thereby promoting a NLRP3-mediated inflammasome response and interleukin 1-beta (IL-1beta) release. Induces the production of proinflammatory cytokines including type I interferon (IFN) in plasmacytoid dendritic cells (pDCs) by triggering the degradation of NFKBIA and nuclear translocation of IRF1, both of which are required for activation of pDCs. This chain is Neutrophil defensin 1 (DEFA1), found in Pan troglodytes (Chimpanzee).